A 338-amino-acid chain; its full sequence is uncharacterized protein (338 aa).

Residues 1–20 (MYNNNQNHHNNDNNMNKDEP) form a disordered region. The span at 9-20 (HNNDNNMNKDEP) shows a compositional bias: basic and acidic residues. Residues asparagine 37, asparagine 83, asparagine 97, asparagine 105, asparagine 114, and asparagine 122 are each glycosylated (N-linked (GlcNAc...) asparagine). The disordered stretch occupies residues 55–92 (VNSGNNNNNNNNNNNNNNNNNNNNNNNNNDSIVINMDT). Over residues 59–92 (NNNNNNNNNNNNNNNNNNNNNNNNNDSIVINMDT) the composition is skewed to low complexity. Helical transmembrane passes span 148-168 (YKKFISSLSYITFIGAAIVLI), 178-198 (FHAYQSFYISMGVIGFQFLLI), and 202-222 (ILSIILWSLYLLFTIFMFLKV). Residues asparagine 229, asparagine 240, asparagine 286, asparagine 302, asparagine 317, and asparagine 322 are each glycosylated (N-linked (GlcNAc...) asparagine). Disordered stretches follow at residues 279-303 (SNLNRNNNNSNNVNNNGHQRINSNS) and 316-338 (LNSSGSNSSIYSDVQNDIGTNEE). Positions 280–294 (NLNRNNNNSNNVNNN) are enriched in low complexity. The segment covering 316 to 327 (LNSSGSNSSIYS) has biased composition (low complexity). Positions 328-338 (DVQNDIGTNEE) are enriched in polar residues.

It is found in the membrane. This is an uncharacterized protein from Dictyostelium discoideum (Social amoeba).